An 86-amino-acid chain; its full sequence is MALNLQDKQAIVAEVSEVAKGALSAVVADSRGVTVDKMTELRKAGREAGVYMRVVRNTLMRCVVEGTPFECLKDTFVGPTLIVFSH.

It belongs to the universal ribosomal protein uL10 family. In terms of assembly, part of the ribosomal stalk of the 50S ribosomal subunit. The N-terminus interacts with L11 and the large rRNA to form the base of the stalk. The C-terminus forms an elongated spine to which L12 dimers bind in a sequential fashion forming a multimeric L10(L12)X complex.

Its function is as follows. Forms part of the ribosomal stalk, playing a central role in the interaction of the ribosome with GTP-bound translation factors. The polypeptide is Large ribosomal subunit protein uL10 (rplJ) (Serratia marcescens).